A 382-amino-acid polypeptide reads, in one-letter code: Lipid-A-disaccharide synthase (382 aa).

The protein belongs to the LpxB family.

It carries out the reaction 2-N,3-O-bis[(3R)-3-hydroxytetradecanoyl]-alpha-D-glucosaminyl 1-phosphate + UDP-2-N,3-O-bis[(3R)-3-hydroxytetradecanoyl]-alpha-D-glucosamine = lipid A disaccharide (E. coli) + UDP + H(+). The enzyme catalyses a lipid X + a UDP-2-N,3-O-bis[(3R)-3-hydroxyacyl]-alpha-D-glucosamine = a lipid A disaccharide + UDP + H(+). It participates in glycolipid biosynthesis; lipid IV(A) biosynthesis; lipid IV(A) from (3R)-3-hydroxytetradecanoyl-[acyl-carrier-protein] and UDP-N-acetyl-alpha-D-glucosamine: step 5/6. Functionally, condensation of UDP-2,3-diacylglucosamine and 2,3-diacylglucosamine-1-phosphate to form lipid A disaccharide, a precursor of lipid A, a phosphorylated glycolipid that anchors the lipopolysaccharide to the outer membrane of the cell. The polypeptide is Lipid-A-disaccharide synthase (Salmonella paratyphi A (strain AKU_12601)).